We begin with the raw amino-acid sequence, 317 residues long: Methionyl-tRNA formyltransferase (317 aa).

112–115 contacts (6S)-5,6,7,8-tetrahydrofolate; it reads SLLP.

This sequence belongs to the Fmt family.

The enzyme catalyses L-methionyl-tRNA(fMet) + (6R)-10-formyltetrahydrofolate = N-formyl-L-methionyl-tRNA(fMet) + (6S)-5,6,7,8-tetrahydrofolate + H(+). Functionally, attaches a formyl group to the free amino group of methionyl-tRNA(fMet). The formyl group appears to play a dual role in the initiator identity of N-formylmethionyl-tRNA by promoting its recognition by IF2 and preventing the misappropriation of this tRNA by the elongation apparatus. The sequence is that of Methionyl-tRNA formyltransferase from Mycobacterium avium (strain 104).